Reading from the N-terminus, the 577-residue chain is Nuclear fusion protein tht1 (577 aa).

The signal sequence occupies residues 1 to 29 (MKFHPTRPFGLYFEFFIIISFFFTSESTG). The Lumenal segment spans residues 30-404 (DVESFMKYSN…MNVYFKGLSN (375 aa)). N-linked (GlcNAc...) asparagine glycans are attached at residues asparagine 163 and asparagine 372. Residues 405 to 425 (IISSFAFIGFTLFATLSSLFF) traverse the membrane as a helical segment. Topologically, residues 426–433 (KVLKIHRR) are cytoplasmic. The helical transmembrane segment at 434–454 (PIIVFGSLSIIFIHIYCFKIT) threads the bilayer. Residues 455–470 (SWVNLYGWITCTIART) lie on the Lumenal side of the membrane. Residues 471–491 (LSFIKLNIRTFYLTAFLCALL) form a helical membrane-spanning segment. Residues 492–577 (NFLRYLKYRN…ESLEQSPWWD (86 aa)) are Cytoplasmic-facing.

This sequence belongs to the KAR5 family. In terms of processing, N-glycosylated.

It localises to the endoplasmic reticulum membrane. It is found in the nucleus membrane. Functionally, required for nuclear membrane fusion during karyogamy. The sequence is that of Nuclear fusion protein tht1 (tht1) from Schizosaccharomyces pombe (strain 972 / ATCC 24843) (Fission yeast).